The primary structure comprises 644 residues: 3D-(3,5/4)-trihydroxycyclohexane-1,2-dione hydrolase 1 (644 aa).

Residue Glu-65 coordinates thiamine diphosphate. The thiamine pyrophosphate binding stretch occupies residues 442 to 522; the sequence is SLPGDLQRMW…INVLLFDNSG (81 aa). Mg(2+) contacts are provided by Asp-493 and Asn-520.

This sequence belongs to the TPP enzyme family. Mg(2+) is required as a cofactor. The cofactor is thiamine diphosphate.

The catalysed reaction is 3D-3,5/4-trihydroxycyclohexane-1,2-dione + H2O = 5-deoxy-D-glucuronate + H(+). It functions in the pathway polyol metabolism; myo-inositol degradation into acetyl-CoA; acetyl-CoA from myo-inositol: step 3/7. Functionally, involved in the cleavage of the C1-C2 bond of 3D-(3,5/4)-trihydroxycyclohexane-1,2-dione (THcHDO) to yield 5-deoxy-glucuronate (5DG). In Bacillus cereus (strain ZK / E33L), this protein is 3D-(3,5/4)-trihydroxycyclohexane-1,2-dione hydrolase 1.